The following is a 357-amino-acid chain: MAINTDTSGKQKALTMVLNQIERSFGKGAIMRLGDATRMRVETISTGALTLDLALGGGLPKGRVIEIYGPESSGKTTVALHAIAEVQKEGGIAAFVDAEHALDPTYASALGVDIQNLLVSQPDTGESALEIVDQLVRSAAVDIVVIDSVAALVPRAEIEGDMGDAHVGLQARLMSQALRKITGNIGKSGCTVIFINQLRQKIGVTYGSPETTTGGNALKFYASVRLDIRRIQTLKKGTDEFGNRVKVKVAKNKVAPPFRIAEFDIIFGKGVSTLGCLVDLAEETGILIRKGAWYSYNGDNISQGRDNAIKYLEEKPEFSEQIKQQVREKLDKGAVVSANSVAKNNEDDEDEDVEEEE.

69 to 76 (GPESSGKT) lines the ATP pocket. The segment at 337 to 357 (SANSVAKNNEDDEDEDVEEEE) is disordered. Over residues 346 to 357 (EDDEDEDVEEEE) the composition is skewed to acidic residues.

This sequence belongs to the RecA family.

It is found in the cytoplasm. In terms of biological role, can catalyze the hydrolysis of ATP in the presence of single-stranded DNA, the ATP-dependent uptake of single-stranded DNA by duplex DNA, and the ATP-dependent hybridization of homologous single-stranded DNAs. It interacts with LexA causing its activation and leading to its autocatalytic cleavage. This is Protein RecA from Nostoc sp. (strain PCC 7120 / SAG 25.82 / UTEX 2576).